The chain runs to 246 residues: Triosephosphate isomerase (246 aa).

9-11 (NWK) lines the substrate pocket. The active-site Electrophile is His-91. Glu-161 (proton acceptor) is an active-site residue. Residues Gly-167, Ser-206, and 227–228 (GG) contribute to the substrate site.

It belongs to the triosephosphate isomerase family. As to quaternary structure, homodimer.

The protein resides in the cytoplasm. It catalyses the reaction D-glyceraldehyde 3-phosphate = dihydroxyacetone phosphate. The protein operates within carbohydrate biosynthesis; gluconeogenesis. It functions in the pathway carbohydrate degradation; glycolysis; D-glyceraldehyde 3-phosphate from glycerone phosphate: step 1/1. Involved in the gluconeogenesis. Catalyzes stereospecifically the conversion of dihydroxyacetone phosphate (DHAP) to D-glyceraldehyde-3-phosphate (G3P). This Ruegeria sp. (strain TM1040) (Silicibacter sp.) protein is Triosephosphate isomerase.